Reading from the N-terminus, the 586-residue chain is Arginine--tRNA ligase (586 aa).

The 'HIGH' region motif lies at 131-141 (ANPTGPMHVGH).

It belongs to the class-I aminoacyl-tRNA synthetase family. In terms of assembly, monomer.

It is found in the cytoplasm. The catalysed reaction is tRNA(Arg) + L-arginine + ATP = L-arginyl-tRNA(Arg) + AMP + diphosphate. The chain is Arginine--tRNA ligase from Azorhizobium caulinodans (strain ATCC 43989 / DSM 5975 / JCM 20966 / LMG 6465 / NBRC 14845 / NCIMB 13405 / ORS 571).